The chain runs to 2183 residues: Genome polyprotein (2183 aa).

The N-myristoyl glycine; by host moiety is linked to residue G2. Residues 2 to 1493 are Cytoplasmic-facing; sequence GAQVSTQKTG…HVSRAFICLQ (1492 aa). Positions 566-582 are amphipathic alpha-helix; the sequence is FYQGPTEESVERAMGRV. Residues H870 and D888 each act as for protease 2A activity in the active site. C905 and C907 together coordinate Zn(2+). C959 serves as the catalytic For protease 2A activity. The Zn(2+) site is built by C965 and H967. The segment at 1099 to 1171 is membrane-binding; sequence NNNWLKKFTE…EQSAPSQSDQ (73 aa). Positions 1099–1237 are oligomerization; sequence NNNWLKKFTE…SPGAGKSVAT (139 aa). Residues 1120 to 1124 form an RNA-binding region; that stretch reads AVKIQ. The region spanning 1203–1359 is the SF3 helicase domain; that stretch reads EKKMSNYIQF…SMYSQNGKIN (157 aa). Zn(2+)-binding residues include C1367, C1379, and C1384. The C4-type; degenerate zinc-finger motif lies at 1367–1384; it reads CDEECCPVNFKKCCPLVC. Positions 1411–1418 are RNA-binding; it reads EYNHRHSV. The segment at 1422–1427 is oligomerization; that stretch reads LEALFQ. An intramembrane segment occupies 1494 to 1509; that stretch reads ALTTFVSVAGIIYIIY. The Cytoplasmic portion of the chain corresponds to 1510–2183; that stretch reads KLFAGFQGAY…TLRRKWLDAF (674 aa). Residue Y1519 is modified to O-(5'-phospho-RNA)-tyrosine. One can recognise a Peptidase C3 domain in the interval 1539 to 1717; it reads GPAFEFAVAM…FSASLLRHYF (179 aa). Residues H1578, E1609, and C1685 each act as for protease 3C activity in the active site. Positions 1948 to 2064 constitute a RdRp catalytic domain; the sequence is GHLRAFDYSG…SYPLPIDASL (117 aa). D1954 and D2050 together coordinate Mg(2+).

The protein belongs to the picornaviruses polyprotein family. Interacts with capsid protein VP1 and capsid protein VP3 to form heterotrimeric protomers. As to quaternary structure, interacts with capsid protein VP0, and capsid protein VP3 to form heterotrimeric protomers. Five protomers subsequently associate to form pentamers which serve as building blocks for the capsid. Interacts with capsid protein VP2, capsid protein VP3 and capsid protein VP4 following cleavage of capsid protein VP0. Interacts with host CXADR. In terms of assembly, interacts with capsid protein VP1 and capsid protein VP3 in the mature capsid. Interacts with capsid protein VP0 and capsid protein VP1 to form heterotrimeric protomers. Five protomers subsequently associate to form pentamers which serve as building blocks for the capsid. Interacts with capsid protein VP4 in the mature capsid. Interacts with protein 2C; this interaction may be important for virion morphogenesis. As to quaternary structure, interacts with capsid protein VP1 and capsid protein VP3. In terms of assembly, homodimer. Homohexamer; forms a hexameric ring structure with 6-fold symmetry characteristic of AAA+ ATPases. Interacts (via N-terminus) with host RTN3 (via reticulon domain); this interaction is important for viral replication. Interacts with capsid protein VP3; this interaction may be important for virion morphogenesis. As to quaternary structure, interacts with protein 3CD. In terms of assembly, homodimer. Interacts with host GBF1. Interacts (via GOLD domain) with host ACBD3 (via GOLD domain); this interaction allows the formation of a viral protein 3A/ACBD3 heterotetramer with a 2:2 stoichiometry, which will stimulate the recruitment of host PI4KB in order to synthesize PI4P at the viral RNA replication sites. Interacts with RNA-directed RNA polymerase. As to quaternary structure, interacts with protein 3AB and with RNA-directed RNA polymerase. In terms of assembly, interacts with Viral protein genome-linked and with protein 3CD. Mg(2+) serves as cofactor. Specific enzymatic cleavages in vivo by the viral proteases yield processing intermediates and the mature proteins. In terms of processing, myristoylation is required for the formation of pentamers during virus assembly. Further assembly of 12 pentamers and a molecule of genomic RNA generates the provirion. Post-translationally, during virion maturation, immature virions are rendered infectious following cleavage of VP0 into VP4 and VP2. This maturation seems to be an autocatalytic event triggered by the presence of RNA in the capsid and it is followed by a conformational change infectious virion. Myristoylation is required during RNA encapsidation and formation of the mature virus particle. In terms of processing, VPg is uridylylated by the polymerase into VPg-pUpU. This acts as a nucleotide-peptide primer for the genomic RNA replication.

It localises to the virion. It is found in the host cytoplasm. The protein localises to the host cytoplasmic vesicle membrane. Its subcellular location is the host nucleus. The catalysed reaction is a ribonucleoside 5'-triphosphate + H2O = a ribonucleoside 5'-diphosphate + phosphate + H(+). It carries out the reaction Selective cleavage of Tyr-|-Gly bond in the picornavirus polyprotein.. It catalyses the reaction RNA(n) + a ribonucleoside 5'-triphosphate = RNA(n+1) + diphosphate. The enzyme catalyses Selective cleavage of Gln-|-Gly bond in the poliovirus polyprotein. In other picornavirus reactions Glu may be substituted for Gln, and Ser or Thr for Gly.. Replication or transcription is subject to high level of random mutations by the nucleotide analog ribavirin. In terms of biological role, forms an icosahedral capsid of pseudo T=3 symmetry with capsid proteins VP2 and VP3. The capsid is 300 Angstroms in diameter, composed of 60 copies of each capsid protein and enclosing the viral positive strand RNA genome. Capsid protein VP1 mainly forms the vertices of the capsid. Capsid protein VP1 interacts with host CXADR to provide virion attachment to target host cells. This attachment induces virion internalization. Tyrosine kinases are probably involved in the entry process. After binding to its receptor, the capsid undergoes conformational changes. Capsid protein VP1 N-terminus (that contains an amphipathic alpha-helix) and capsid protein VP4 are externalized. Together, they shape a pore in the host membrane through which viral genome is translocated to host cell cytoplasm. Functionally, forms an icosahedral capsid of pseudo T=3 symmetry with capsid proteins VP2 and VP3. The capsid is 300 Angstroms in diameter, composed of 60 copies of each capsid protein and enclosing the viral positive strand RNA genome. Lies on the inner surface of the capsid shell. After binding to the host receptor, the capsid undergoes conformational changes. Capsid protein VP4 is released, Capsid protein VP1 N-terminus is externalized, and together, they shape a pore in the host membrane through which the viral genome is translocated into the host cell cytoplasm. Its function is as follows. Component of immature procapsids, which is cleaved into capsid proteins VP4 and VP2 after maturation. Allows the capsid to remain inactive before the maturation step. In terms of biological role, cysteine protease that cleaves viral polyprotein and specific host proteins. It is responsible for the autocatalytic cleavage between the P1 and P2 regions, which is the first cleavage occurring in the polyprotein. Also cleaves the host translation initiation factor EIF4G1, in order to shut down the capped cellular mRNA translation. Inhibits the host nucleus-cytoplasm protein and RNA trafficking by cleaving host members of the nuclear pores. Counteracts stress granule formation probably by antagonizing its assembly or promoting its dissassembly. Cleaves and inhibits host IFIH1/MDA5, thereby inhibiting the type-I IFN production and the establishment of the antiviral state. Cleaves and inhibits host MAVS, thereby inhibiting the type-I IFN production and the establishment of the antiviral state. Functionally, plays an essential role in the virus replication cycle by acting as a viroporin. Creates a pore in the host endoplasmic reticulum and as a consequence releases Ca2+ in the cytoplasm of infected cell. In turn, high levels of cytoplasmic calcium may trigger membrane trafficking and transport of viral ER-associated proteins to viroplasms, sites of viral genome replication. Induces and associates with structural rearrangements of intracellular membranes. Displays RNA-binding, nucleotide binding and NTPase activities. May play a role in virion morphogenesis and viral RNA encapsidation by interacting with the capsid protein VP3. Its function is as follows. Localizes the viral replication complex to the surface of membranous vesicles. Together with protein 3CD binds the Cis-Active RNA Element (CRE) which is involved in RNA synthesis initiation. Acts as a cofactor to stimulate the activity of 3D polymerase, maybe through a nucleid acid chaperone activity. In terms of biological role, localizes the viral replication complex to the surface of membranous vesicles. It inhibits host cell endoplasmic reticulum-to-Golgi apparatus transport and causes the disassembly of the Golgi complex, possibly through GBF1 interaction. This would result in depletion of MHC, trail receptors and IFN receptors at the host cell surface. Plays an essential role in viral RNA replication by recruiting ACBD3 and PI4KB at the viral replication sites, thereby allowing the formation of the rearranged membranous structures where viral replication takes place. Functionally, acts as a primer for viral RNA replication and remains covalently bound to viral genomic RNA. VPg is uridylylated prior to priming replication into VPg-pUpU. The oriI viral genomic sequence may act as a template for this. The VPg-pUpU is then used as primer on the genomic RNA poly(A) by the RNA-dependent RNA polymerase to replicate the viral genome. During genome replication, the VPg-RNA linkage is removed by the host TDP2, thereby accelerating replication. During the late stage of the replication cycle, host TDP2 is excluded from sites of viral RNA synthesis and encapsidation, allowing for the generation of progeny virions. Involved in the viral replication complex and viral polypeptide maturation. It exhibits protease activity with a specificity and catalytic efficiency that is different from protease 3C. Protein 3CD lacks polymerase activity. Protein 3CD binds to the 5'UTR of the viral genome. Its function is as follows. Replicates the viral genomic RNA on the surface of intracellular membranes. May form linear arrays of subunits that propagate along a strong head-to-tail interaction called interface-I. Covalently attaches UMP to a tyrosine of VPg, which is used to prime RNA synthesis. The positive stranded RNA genome is first replicated at virus induced membranous vesicles, creating a dsRNA genomic replication form. This dsRNA is then used as template to synthesize positive stranded RNA genomes. ss(+)RNA genomes are either translated, replicated or encapsidated. In terms of biological role, major viral protease that mediates proteolytic processing of the polyprotein. Cleaves host EIF5B, contributing to host translation shutoff. Also cleaves host PABPC1, contributing to host translation shutoff. Cleaves host NLRP1, triggers host N-glycine-mediated degradation of the autoinhibitory NLRP1 N-terminal fragment. This Coxsackievirus B4 (strain E2) protein is Genome polyprotein.